A 932-amino-acid chain; its full sequence is ER degradation-enhancing alpha-mannosidase-like protein 3 (932 aa).

The N-terminal stretch at 1 to 41 (MSEAGGRGCGSPVPQRARWRLVAATAAFCLVSATSVWTAGA) is a signal peptide. The N-linked (GlcNAc...) asparagine glycan is linked to asparagine 118. Residue glutamate 146 is the Proton donor of the active site. An N-linked (GlcNAc...) asparagine glycan is attached at asparagine 195. Aspartate 293 is a catalytic residue. Glutamate 387 serves as the catalytic Proton donor. Glutamate 405 is an active-site residue. Threonine 491 contributes to the Ca(2+) binding site. N-linked (GlcNAc...) asparagine glycans are attached at residues asparagine 504 and asparagine 511. Positions 674 to 779 (LSKHKETRGF…KEGSIILDAI (106 aa)) constitute a PA domain. The span at 790 to 799 (SDKAKDRDPE) shows a compositional bias: basic and acidic residues. The segment at 790–908 (SDKAKDRDPE…PNVSWGKKVQ (119 aa)) is disordered. N-linked (GlcNAc...) asparagine glycosylation is found at asparagine 810 and asparagine 814. Residues 812-825 (SQNQSGEQISSSSQ) show a composition bias toward low complexity. Polar residues predominate over residues 856-890 (ASISPSEQTSNPTENHETTNLNGECTDLDNQLQEQ). Asparagine 900 is a glycosylation site (N-linked (GlcNAc...) asparagine). The Prevents secretion from ER signature appears at 929-932 (KDEL).

Belongs to the glycosyl hydrolase 47 family. It depends on Ca(2+) as a cofactor.

It is found in the endoplasmic reticulum lumen. The enzyme catalyses N(4)-(alpha-D-Man-(1-&gt;2)-alpha-D-Man-(1-&gt;2)-alpha-D-Man-(1-&gt;3)-[alpha-D-Man-(1-&gt;2)-alpha-D-Man-(1-&gt;3)-[alpha-D-Man-(1-&gt;2)-alpha-D-Man-(1-&gt;6)]-alpha-D-Man-(1-&gt;6)]-beta-D-Man-(1-&gt;4)-beta-D-GlcNAc-(1-&gt;4)-beta-D-GlcNAc)-L-asparaginyl-[protein] (N-glucan mannose isomer 9A1,2,3B1,2,3) + 4 H2O = N(4)-(alpha-D-Man-(1-&gt;3)-[alpha-D-Man-(1-&gt;3)-[alpha-D-Man-(1-&gt;6)]-alpha-D-Man-(1-&gt;6)]-beta-D-Man-(1-&gt;4)-beta-D-GlcNAc-(1-&gt;4)-beta-D-GlcNAc)-L-asparaginyl-[protein] (N-glucan mannose isomer 5A1,2) + 4 beta-D-mannose. It carries out the reaction N(4)-(alpha-D-Man-(1-&gt;2)-alpha-D-Man-(1-&gt;2)-alpha-D-Man-(1-&gt;3)-[alpha-D-Man-(1-&gt;3)-[alpha-D-Man-(1-&gt;2)-alpha-D-Man-(1-&gt;6)]-alpha-D-Man-(1-&gt;6)]-beta-D-Man-(1-&gt;4)-beta-D-GlcNAc-(1-&gt;4)-beta-D-GlcNAc)-L-asparaginyl-[protein] (N-glucan mannose isomer 8A1,2,3B1,3) + 3 H2O = N(4)-(alpha-D-Man-(1-&gt;3)-[alpha-D-Man-(1-&gt;3)-[alpha-D-Man-(1-&gt;6)]-alpha-D-Man-(1-&gt;6)]-beta-D-Man-(1-&gt;4)-beta-D-GlcNAc-(1-&gt;4)-beta-D-GlcNAc)-L-asparaginyl-[protein] (N-glucan mannose isomer 5A1,2) + 3 beta-D-mannose. It participates in protein modification; protein glycosylation. Functionally, involved in endoplasmic reticulum-associated degradation (ERAD). Accelerates the glycoprotein ERAD by proteasomes, by catalyzing mannose trimming from Man8GlcNAc2 to Man7GlcNAc2 in the N-glycans. May also participate in mannose trimming from all glycoproteins and not just misfolded ones targeted to ERAD. May have alpha 1,2-mannosidase activity. The polypeptide is ER degradation-enhancing alpha-mannosidase-like protein 3 (EDEM3) (Homo sapiens (Human)).